We begin with the raw amino-acid sequence, 989 residues long: Mediator of RNA polymerase II transcription subunit 24 (989 aa).

6 short sequence motifs (LXXLL motif) span residues 128–132 (LHWLL), 344–348 (LTPLL), 448–452 (LDLLL), 557–561 (LVALL), 788–792 (LPGLL), and 857–861 (LMRLL). Ser862 and Ser873 each carry phosphoserine.

The protein belongs to the Mediator complex subunit 24 family. Component of the Mediator complex, which is composed of MED1, MED4, MED6, MED7, MED8, MED9, MED10, MED11, MED12, MED13, MED13L, MED14, MED15, MED16, MED17, MED18, MED19, MED20, MED21, MED22, MED23, MED24, MED25, MED26, MED27, MED29, MED30, MED31, CCNC, CDK8 and CDC2L6/CDK11. The MED12, MED13, CCNC and CDK8 subunits form a distinct module termed the CDK8 module. Mediator containing the CDK8 module is less active than Mediator lacking this module in supporting transcriptional activation. Individual preparations of the Mediator complex lacking one or more distinct subunits have been variously termed ARC, CRSP, DRIP, PC2, SMCC and TRAP. Interacts with AR. As to expression, ubiquitous. Abundant in skeletal muscle, heart and placenta.

Its subcellular location is the nucleus. Functionally, component of the Mediator complex, a coactivator involved in the regulated transcription of nearly all RNA polymerase II-dependent genes. Mediator functions as a bridge to convey information from gene-specific regulatory proteins to the basal RNA polymerase II transcription machinery. Mediator is recruited to promoters by direct interactions with regulatory proteins and serves as a scaffold for the assembly of a functional preinitiation complex with RNA polymerase II and the general transcription factors. The polypeptide is Mediator of RNA polymerase II transcription subunit 24 (MED24) (Homo sapiens (Human)).